We begin with the raw amino-acid sequence, 334 residues long: Ketol-acid reductoisomerase (NADP(+)) (334 aa).

One can recognise a KARI N-terminal Rossmann domain in the interval 3 to 183 (ATIYYENDAD…GGTRGGVIET (181 aa)). NADP(+) is bound by residues 26-29 (YGSQ), Arg49, Ser52, and 84-87 (DEVQ). Residue His109 is part of the active site. Residue Gly135 participates in NADP(+) binding. The 146-residue stretch at 184–329 (TFAEETETDL…LGLRRMMNWI (146 aa)) folds into the KARI C-terminal knotted domain. Residues Asp192, Glu196, Glu228, and Glu232 each coordinate Mg(2+). Ser253 lines the substrate pocket.

Belongs to the ketol-acid reductoisomerase family. Mg(2+) is required as a cofactor.

The catalysed reaction is (2R)-2,3-dihydroxy-3-methylbutanoate + NADP(+) = (2S)-2-acetolactate + NADPH + H(+). It catalyses the reaction (2R,3R)-2,3-dihydroxy-3-methylpentanoate + NADP(+) = (S)-2-ethyl-2-hydroxy-3-oxobutanoate + NADPH + H(+). It participates in amino-acid biosynthesis; L-isoleucine biosynthesis; L-isoleucine from 2-oxobutanoate: step 2/4. Its pathway is amino-acid biosynthesis; L-valine biosynthesis; L-valine from pyruvate: step 2/4. Involved in the biosynthesis of branched-chain amino acids (BCAA). Catalyzes an alkyl-migration followed by a ketol-acid reduction of (S)-2-acetolactate (S2AL) to yield (R)-2,3-dihydroxy-isovalerate. In the isomerase reaction, S2AL is rearranged via a Mg-dependent methyl migration to produce 3-hydroxy-3-methyl-2-ketobutyrate (HMKB). In the reductase reaction, this 2-ketoacid undergoes a metal-dependent reduction by NADPH to yield (R)-2,3-dihydroxy-isovalerate. This Rhodopirellula baltica (strain DSM 10527 / NCIMB 13988 / SH1) protein is Ketol-acid reductoisomerase (NADP(+)).